A 317-amino-acid polypeptide reads, in one-letter code: Melanocyte-stimulating hormone receptor (317 aa).

The Extracellular segment spans residues 1 to 37 (MSVQGPQRRLLGSVNSTSPAAPRLGLAANQTGPRCLE). Asn-15 and Asn-29 each carry an N-linked (GlcNAc...) asparagine glycan. The chain crosses the membrane as a helical span at residues 38–63 (VSVPDGLFLSLGLVSVVENVLVVAAI). Residues 64-72 (AKNRNLHSP) lie on the Cytoplasmic side of the membrane. A helical transmembrane segment spans residues 73 to 93 (MYYFICCLAVSDLLVSVSSVL). Residues 94 to 118 (ETAVMLLLEAGTLAGRAAVVQQLDD) lie on the Extracellular side of the membrane. Residues 119-140 (IIDVLVCGAMVSSLCFLGAIAV) form a helical membrane-spanning segment. Residues 141–163 (DRYISIFYALRYHSIVTLPRAWR) lie on the Cytoplasmic side of the membrane. Residues 164 to 183 (AISAIWVASVLSSTLFIAYY) traverse the membrane as a helical segment. Topologically, residues 184–191 (DHTAVLLC) are extracellular. Residues 192–211 (LVSFFVAMLVLMAVLYVHML) form a helical membrane-spanning segment. The Cytoplasmic segment spans residues 212–240 (ARACQHARGIARLHKRQRPVHQGLGLKGA). The chain crosses the membrane as a helical span at residues 241 to 266 (ATLTILLGIFFLCWGPFFLHLSLMVL). Residues 267–279 (CPRHPICGCVFKN) lie on the Extracellular side of the membrane. Residues 280-300 (FNLFLTLIICNSIVDPLIYAF) form a helical membrane-spanning segment. Residues 301 to 317 (RSQELRKTLREVLLCSW) lie on the Cytoplasmic side of the membrane. Cys-315 carries the S-palmitoyl cysteine lipid modification.

It belongs to the G-protein coupled receptor 1 family. As to quaternary structure, interacts with MGRN1, but does not undergo MGRN1-mediated ubiquitination; this interaction competes with GNAS-binding and thus inhibits agonist-induced cAMP production. Interacts with OPN3; the interaction results in a decrease in MC1R-mediated cAMP signaling and ultimately a decrease in melanin production in melanocytes.

The protein localises to the cell membrane. Functionally, receptor for MSH (alpha, beta and gamma) and ACTH. The activity of this receptor is mediated by G proteins which activate adenylate cyclase. Mediates melanogenesis, the production of eumelanin (black/brown) and phaeomelanin (red/yellow), via regulation of cAMP signaling in melanocytes. In Puma yagouaroundi (Jaguarundi), this protein is Melanocyte-stimulating hormone receptor (MC1R).